The sequence spans 433 residues: 3-phosphoshikimate 1-carboxyvinyltransferase (433 aa).

The 3-phosphoshikimate site is built by Lys21, Ser22, and Arg26. Lys21 is a binding site for phosphoenolpyruvate. Phosphoenolpyruvate is bound by residues Gly92 and Arg120. 3-phosphoshikimate-binding residues include Ser166, Gln168, Asp317, and Lys344. Gln168 is a binding site for phosphoenolpyruvate. Asp317 serves as the catalytic Proton acceptor. Arg348 and Arg391 together coordinate phosphoenolpyruvate.

The protein belongs to the EPSP synthase family. In terms of assembly, monomer.

It localises to the cytoplasm. It carries out the reaction 3-phosphoshikimate + phosphoenolpyruvate = 5-O-(1-carboxyvinyl)-3-phosphoshikimate + phosphate. It participates in metabolic intermediate biosynthesis; chorismate biosynthesis; chorismate from D-erythrose 4-phosphate and phosphoenolpyruvate: step 6/7. In terms of biological role, catalyzes the transfer of the enolpyruvyl moiety of phosphoenolpyruvate (PEP) to the 5-hydroxyl of shikimate-3-phosphate (S3P) to produce enolpyruvyl shikimate-3-phosphate and inorganic phosphate. This chain is 3-phosphoshikimate 1-carboxyvinyltransferase, found in Caldicellulosiruptor saccharolyticus (strain ATCC 43494 / DSM 8903 / Tp8T 6331).